Consider the following 234-residue polypeptide: Phosphoribosylaminoimidazole-succinocarboxamide synthase (234 aa).

Belongs to the SAICAR synthetase family.

It catalyses the reaction 5-amino-1-(5-phospho-D-ribosyl)imidazole-4-carboxylate + L-aspartate + ATP = (2S)-2-[5-amino-1-(5-phospho-beta-D-ribosyl)imidazole-4-carboxamido]succinate + ADP + phosphate + 2 H(+). It functions in the pathway purine metabolism; IMP biosynthesis via de novo pathway; 5-amino-1-(5-phospho-D-ribosyl)imidazole-4-carboxamide from 5-amino-1-(5-phospho-D-ribosyl)imidazole-4-carboxylate: step 1/2. The sequence is that of Phosphoribosylaminoimidazole-succinocarboxamide synthase from Sulfurisphaera tokodaii (strain DSM 16993 / JCM 10545 / NBRC 100140 / 7) (Sulfolobus tokodaii).